Consider the following 317-residue polypeptide: tRNA(Ile)-lysidine synthase (317 aa).

30-35 (SGGSDS) serves as a coordination point for ATP.

This sequence belongs to the tRNA(Ile)-lysidine synthase family.

It is found in the cytoplasm. The catalysed reaction is cytidine(34) in tRNA(Ile2) + L-lysine + ATP = lysidine(34) in tRNA(Ile2) + AMP + diphosphate + H(+). In terms of biological role, ligates lysine onto the cytidine present at position 34 of the AUA codon-specific tRNA(Ile) that contains the anticodon CAU, in an ATP-dependent manner. Cytidine is converted to lysidine, thus changing the amino acid specificity of the tRNA from methionine to isoleucine. The polypeptide is tRNA(Ile)-lysidine synthase (Chlamydia caviae (strain ATCC VR-813 / DSM 19441 / 03DC25 / GPIC) (Chlamydophila caviae)).